A 349-amino-acid polypeptide reads, in one-letter code: Phosphoribosylformylglycinamidine cyclo-ligase (349 aa).

It belongs to the AIR synthase family.

Its subcellular location is the cytoplasm. The enzyme catalyses 2-formamido-N(1)-(5-O-phospho-beta-D-ribosyl)acetamidine + ATP = 5-amino-1-(5-phospho-beta-D-ribosyl)imidazole + ADP + phosphate + H(+). The protein operates within purine metabolism; IMP biosynthesis via de novo pathway; 5-amino-1-(5-phospho-D-ribosyl)imidazole from N(2)-formyl-N(1)-(5-phospho-D-ribosyl)glycinamide: step 2/2. The chain is Phosphoribosylformylglycinamidine cyclo-ligase from Bordetella pertussis (strain Tohama I / ATCC BAA-589 / NCTC 13251).